The sequence spans 339 residues: MEILLQKVYDQKNLSKAEMNIVATEIFEGRLSKTKIAAFLMALKVKGETAEEMAGIAEAMQQVAIQVDFPAGTAMDNCGTGGDKSNSFNISTTSAFVLAAAGIPVAKHGNRSISSRSGSADVCQELGIDINMRPEDMTYLLEKVGIAFLFAPHVHPNMKYVMDVRKELGTPTIFNLIGPLTNPVHLETQLMGIYRRDLIRQTAEVLGQLGRKRAVVLNGAGFMDEASLAGENHYALYESGEVHLYTLKPEEVGLASYPLEAIRGGDAKENAAILRSVLDGEPGAYLDTVLLNAGFGLFANGKVKTVKEGVDLARDLVRSGLAKQKLQDLITYQKEVLAK.

Residues Gly79, 82–83, Ser87, 89–92, 107–115, and Ser119 each bind 5-phospho-alpha-D-ribose 1-diphosphate; these read GD, NIST, and KHGNRSISS. Residue Gly79 coordinates anthranilate. A Mg(2+)-binding site is contributed by Ser91. An anthranilate-binding site is contributed by Asn110. Arg165 serves as a coordination point for anthranilate. Asp224 and Glu225 together coordinate Mg(2+).

This sequence belongs to the anthranilate phosphoribosyltransferase family. As to quaternary structure, homodimer. Mg(2+) is required as a cofactor.

It catalyses the reaction N-(5-phospho-beta-D-ribosyl)anthranilate + diphosphate = 5-phospho-alpha-D-ribose 1-diphosphate + anthranilate. Its pathway is amino-acid biosynthesis; L-tryptophan biosynthesis; L-tryptophan from chorismate: step 2/5. Functionally, catalyzes the transfer of the phosphoribosyl group of 5-phosphorylribose-1-pyrophosphate (PRPP) to anthranilate to yield N-(5'-phosphoribosyl)-anthranilate (PRA). The polypeptide is Anthranilate phosphoribosyltransferase (Listeria innocua serovar 6a (strain ATCC BAA-680 / CLIP 11262)).